We begin with the raw amino-acid sequence, 347 residues long: Probable replication factor C subunit 3 (347 aa).

It belongs to the activator 1 small subunits family. Heteropentamer of various rfc subunits that forms a complex (RFC) with PCNA in the presence of ATP.

The protein localises to the nucleus. Functionally, the elongation of primed DNA templates by DNA polymerase delta and epsilon requires the action of the accessory proteins PCNA and activator 1. This Dictyostelium discoideum (Social amoeba) protein is Probable replication factor C subunit 3 (rfc3).